The primary structure comprises 127 residues: MESYVKFQTPETLEKAVLDMVENSYKTGKVRKGTNEVVKSIERGESKLVVIAEDVSPAEVVYYLPTLCEERKVPYVYVKKKSDLGLKVGIASAASVSIVDYGKNDDAYKSIVSQINDAKSGKSENKE.

This sequence belongs to the eukaryotic ribosomal protein eL8 family. As to quaternary structure, part of the 50S ribosomal subunit. Probably part of the RNase P complex.

The protein localises to the cytoplasm. Multifunctional RNA-binding protein that recognizes the K-turn motif in ribosomal RNA, the RNA component of RNase P, box H/ACA, box C/D and box C'/D' sRNAs. This Picrophilus torridus (strain ATCC 700027 / DSM 9790 / JCM 10055 / NBRC 100828 / KAW 2/3) protein is Large ribosomal subunit protein eL8.